A 433-amino-acid chain; its full sequence is Chaperone SurA (433 aa).

A signal peptide spans methionine 1–alanine 24. 2 PpiC domains span residues asparagine 175 to aspartate 276 and valine 285 to aspartate 384.

It is found in the periplasm. The catalysed reaction is [protein]-peptidylproline (omega=180) = [protein]-peptidylproline (omega=0). Chaperone involved in the correct folding and assembly of outer membrane proteins. Recognizes specific patterns of aromatic residues and the orientation of their side chains, which are found more frequently in integral outer membrane proteins. May act in both early periplasmic and late outer membrane-associated steps of protein maturation. In Colwellia psychrerythraea (strain 34H / ATCC BAA-681) (Vibrio psychroerythus), this protein is Chaperone SurA.